We begin with the raw amino-acid sequence, 283 residues long: 5'-nucleotidase SurE (283 aa).

The a divalent metal cation site is built by Asp-14, Asp-15, Ser-47, and Asn-105.

Belongs to the SurE nucleotidase family. A divalent metal cation is required as a cofactor.

It is found in the cytoplasm. It catalyses the reaction a ribonucleoside 5'-phosphate + H2O = a ribonucleoside + phosphate. Its function is as follows. Nucleotidase that shows phosphatase activity on nucleoside 5'-monophosphates. This chain is 5'-nucleotidase SurE, found in Chlamydia muridarum (strain MoPn / Nigg).